The sequence spans 574 residues: Arginine--tRNA ligase (574 aa).

The 'HIGH' region motif lies at 126-136; sequence PNIAKRMHVGH.

It belongs to the class-I aminoacyl-tRNA synthetase family. In terms of assembly, monomer.

It localises to the cytoplasm. It carries out the reaction tRNA(Arg) + L-arginine + ATP = L-arginyl-tRNA(Arg) + AMP + diphosphate. The sequence is that of Arginine--tRNA ligase from Chloroflexus aurantiacus (strain ATCC 29366 / DSM 635 / J-10-fl).